We begin with the raw amino-acid sequence, 404 residues long: Cytoplasmic tRNA 2-thiolation protein 2 (404 aa).

Belongs to the CTU2/NCS2 family.

It is found in the cytoplasm. It participates in tRNA modification; 5-methoxycarbonylmethyl-2-thiouridine-tRNA biosynthesis. Functionally, plays a central role in 2-thiolation of mcm(5)S(2)U at tRNA wobble positions of tRNA(Lys), tRNA(Glu) and tRNA(Gln). May act by forming a heterodimer with NCS6/CTU1 that ligates sulfur from thiocarboxylated URM1 onto the uridine of tRNAs at wobble position. This Drosophila erecta (Fruit fly) protein is Cytoplasmic tRNA 2-thiolation protein 2.